The primary structure comprises 205 residues: Putative 3-methyladenine DNA glycosylase (205 aa).

Belongs to the DNA glycosylase MPG family.

This is Putative 3-methyladenine DNA glycosylase from Bacillus anthracis (strain A0248).